The primary structure comprises 719 residues: MTEENNNTAATVTDQTEHSNIITIQTTLGDEDEDIHKCGKCLAEFSALDAFIQHKLSRSCKRTQDPQTNVVPNEGVSVEVRSSENECSSDETATANGEKQDAKVASGDKKRSRSTSEDESSSPSKVVWKLNTEGRYVCDICAKTFKTTNILRTHMFTHSDQKNFVCEMCETAFRTKGSLIRHKRRHTDERPYRCNQCGLAFRESGALTRHLKSLTPCTEKIRYSQCKEILVSKDGIRKEVQPSSPEPEKEQIPVVRVVEAGQEIIQIEVVEEVQQVASQPQTATVVEADNLICQAIINSGIALETEATEAAGQVEAQSPKAVLGAPETETRITEIQVTEECVETLAEETQDSSVKEVEPVQSKLYKCPHCERMFKTLNYLRVHVKGHVGYKPFKCLTCQKEFLTGYVLKKHMETHVSERRYKCGECGKQFKAIGHVREHMRAHSDERPYHCSFCDKSYKTKNALQVHHRTHADDKPYVCQHCSRGFREKSALVRHIRHHTGEKPFKCSKCGRGFAEHGTLNRHLRAKGGCFAQLKDCEHVVNSEEQEVTTESVSTTIVSDDPHAVLVEFSSVVADTQEYIIGAPAEEAAQGEEVAIIQDNQQQMDSHIMKVVQQIVSQSHGGHQIIVRNVTADETPGISDSGDTITIATPESLTEQVAMTLANAISDGTILTTTTEDTDETSHTTVTMVTAENVETIEQEEQYVIASPEEVEIQTVVVV.

The required for ubiquitin ligase activity stretch occupies residues 20–63; sequence NIITIQTTLGDEDEDIHKCGKCLAEFSALDAFIQHKLSRSCKRT. The disordered stretch occupies residues 59–125; sequence SCKRTQDPQT…SEDESSSPSK (67 aa). Residues 98–109 show a composition bias toward basic and acidic residues; that stretch reads EKQDAKVASGDK. Residues 128–207 form a mediates dimerization and DNA-binding region; sequence WKLNTEGRYV…GLAFRESGAL (80 aa). C2H2-type zinc fingers lie at residues 136-158 and 164-186; these read YVCD…MFTH and FVCE…KRRH. The C2H2-type 3; degenerate zinc finger occupies 192 to 216; it reads YRCNQCGLAFRESGALTRHLKSLTP. 5 C2H2-type zinc fingers span residues 365-387, 393-415, 421-443, 449-471, and 477-499; these read YKCP…VKGH, FKCL…METH, YKCG…MRAH, YHCS…HRTH, and YVCQ…IRHH. The segment at 505–527 adopts a C2H2-type 9; degenerate zinc-finger fold; that stretch reads FKCSKCGRGFAEHGTLNRHLRAK.

It localises to the nucleus. The protein localises to the nucleoplasm. The protein resides in the cytoplasm. It catalyses the reaction S-ubiquitinyl-[E2 ubiquitin-conjugating enzyme]-L-cysteine + [acceptor protein]-L-lysine = [E2 ubiquitin-conjugating enzyme]-L-cysteine + N(6)-ubiquitinyl-[acceptor protein]-L-lysine.. It functions in the pathway protein modification; protein ubiquitination. In terms of biological role, may function as a transcriptional repressor. May also function as a ubiquitin ligase. Functions in cell survival and proliferation through control of the cell cycle. This chain is Transcription factor E4F1 (e4f1), found in Danio rerio (Zebrafish).